The sequence spans 687 residues: Transketolase 2 (687 aa).

His47 is a binding site for substrate. Thiamine diphosphate is bound by residues His87 and 135–137 (GPL). A Mg(2+)-binding site is contributed by Asp176. 2 residues coordinate thiamine diphosphate: Gly177 and Asn206. Residues Asn206 and Ile208 each coordinate Mg(2+). Residues His282, Arg379, and Ser406 each coordinate substrate. His282 provides a ligand contact to thiamine diphosphate. The active-site Proton donor is the Glu432. Phe458 is a thiamine diphosphate binding site. Positions 482, 490, 494, and 541 each coordinate substrate.

It belongs to the transketolase family. Mg(2+) serves as cofactor. Requires thiamine diphosphate as cofactor.

The catalysed reaction is D-sedoheptulose 7-phosphate + D-glyceraldehyde 3-phosphate = aldehydo-D-ribose 5-phosphate + D-xylulose 5-phosphate. Its activity is regulated as follows. Activity is increased sixfold following autotrophic growth on methanol compared with that of heterotrophically grown cells. Its function is as follows. Catalyzes the transfer of a two-carbon ketol group from a ketose donor to an aldose acceptor, via a covalent intermediate with the cofactor thiamine pyrophosphate. The polypeptide is Transketolase 2 (Xanthobacter flavus).